Reading from the N-terminus, the 692-residue chain is Serine/threonine-protein phosphatase PP-Z1 (692 aa).

Disordered regions lie at residues 1–309 (MGNS…DIEN) and 321–357 (ENVN…PKKF). Glycine 2 carries the N-myristoyl glycine lipid modification. Composition is skewed to low complexity over residues 32-41 (SHSVKSAKSN), 49-69 (SLPS…STPS), and 91-122 (SSSH…RRSS). At serine 49 the chain carries Phosphoserine. Over residues 170 to 179 (LTDDDNDDKD) the composition is skewed to acidic residues. Threonine 171 is modified (phosphothreonine). Residues 190–204 (RSSNSRPSSIRSGSV) are compositionally biased toward low complexity. A compositionally biased stretch (basic and acidic residues) spans 207-216 (RKSDVTHEEP). 2 positions are modified to phosphoserine: serine 209 and serine 222. 2 stretches are compositionally biased toward polar residues: residues 217-229 (NNGS…QENY) and 251-267 (FGSD…NSPG). Position 261 is a phosphothreonine (threonine 261). The residue at position 265 (serine 265) is a Phosphoserine. The segment covering 280 to 289 (TSNSTSSLNH) has biased composition (low complexity). Positions 291–303 (SSRDIYPSKHISN) are enriched in basic and acidic residues. Residues 321-331 (ENVNDKNNNIT) show a composition bias toward polar residues. Mn(2+) is bound by residues aspartate 419, histidine 421, aspartate 447, and asparagine 479. Histidine 480 functions as the Proton donor in the catalytic mechanism. Positions 528 and 603 each coordinate Mn(2+). The disordered stretch occupies residues 672–692 (LANQQQQMMETSITNDNESQQ). A compositionally biased stretch (polar residues) spans 673–692 (ANQQQQMMETSITNDNESQQ). Serine 690 bears the Phosphoserine mark.

It belongs to the PPP phosphatase family. PP-Z subfamily. Interacts with SIS2 and VHS3, which regulate its activity. The cofactor is Mn(2+).

The catalysed reaction is O-phospho-L-seryl-[protein] + H2O = L-seryl-[protein] + phosphate. It catalyses the reaction O-phospho-L-threonyl-[protein] + H2O = L-threonyl-[protein] + phosphate. Inhibited by the regulatory subunits VHS3 and SIS2. Essential for the maintenance of cell size and integrity in response to osmotic stress. The polypeptide is Serine/threonine-protein phosphatase PP-Z1 (PPZ1) (Saccharomyces cerevisiae (strain ATCC 204508 / S288c) (Baker's yeast)).